The sequence spans 446 residues: tRNA-2-methylthio-N(6)-dimethylallyladenosine synthase (446 aa).

The 117-residue stretch at 5 to 121 (KYLYVETFGC…LPEIVRAAER (117 aa)) folds into the MTTase N-terminal domain. [4Fe-4S] cluster is bound by residues Cys-14, Cys-50, Cys-84, Cys-159, Cys-163, and Cys-166. The Radical SAM core domain occupies 145–375 (GEGGVTRFVT…QTLQQQMKRE (231 aa)). Positions 378 to 440 (ISFVGTRQLV…QNSLLGEIVT (63 aa)) constitute a TRAM domain.

The protein belongs to the methylthiotransferase family. MiaB subfamily. Monomer. It depends on [4Fe-4S] cluster as a cofactor.

It localises to the cytoplasm. It catalyses the reaction N(6)-dimethylallyladenosine(37) in tRNA + (sulfur carrier)-SH + AH2 + 2 S-adenosyl-L-methionine = 2-methylsulfanyl-N(6)-dimethylallyladenosine(37) in tRNA + (sulfur carrier)-H + 5'-deoxyadenosine + L-methionine + A + S-adenosyl-L-homocysteine + 2 H(+). Catalyzes the methylthiolation of N6-(dimethylallyl)adenosine (i(6)A), leading to the formation of 2-methylthio-N6-(dimethylallyl)adenosine (ms(2)i(6)A) at position 37 in tRNAs that read codons beginning with uridine. The chain is tRNA-2-methylthio-N(6)-dimethylallyladenosine synthase from Geobacter sulfurreducens (strain ATCC 51573 / DSM 12127 / PCA).